Reading from the N-terminus, the 319-residue chain is Cobalamin biosynthesis protein CbiB (319 aa).

Transmembrane regions (helical) follow at residues 56 to 76 (VMWIVVVGATWGMAWGVLALA), 82 to 102 (WLGWSVEVWMIFTVLAGRSLA), 153 to 173 (VDGIIAPLFFLFLGGAPLAMA), 204 to 224 (VANYLPARLSWLLLGIAAGLC), and 296 to 316 (LMWGASTLALALFIAARCWLS).

This sequence belongs to the CobD/CbiB family.

Its subcellular location is the cell membrane. Its pathway is cofactor biosynthesis; adenosylcobalamin biosynthesis. In terms of biological role, converts cobyric acid to cobinamide by the addition of aminopropanol on the F carboxylic group. However, the true cosubstrate could be (R)-1-amino-2-propanol O-2-phosphate, leading to cobinamide phosphate. In Salmonella arizonae (strain ATCC BAA-731 / CDC346-86 / RSK2980), this protein is Cobalamin biosynthesis protein CbiB.